We begin with the raw amino-acid sequence, 202 residues long: MEAEAGGLEELTDEEMAALGKEELVRRLRREEAARLAALVQRGRLMQEVNRQLQGHLGEIRELKQLNRRLQAENRELRDLCCFLDSERQRGRRAARQWQLFGTQASRAVREDLGGCWQKLAELEGRQEELLRENLALKELCLALGEEWGPRGGPGGAVGSGAGPTPELALPPCGPRDLGDGSSSTGSVGSPDQLPLACSPDD.

The residue at position 1 (M1) is an N-acetylmethionine. Coiled coils occupy residues 44 to 82 (RLMQ…DLCC) and 118 to 141 (QKLA…KELC). The segment covering 152-162 (GGPGGAVGSGA) has biased composition (gly residues). The tract at residues 152 to 202 (GGPGGAVGSGAGPTPELALPPCGPRDLGDGSSSTGSVGSPDQLPLACSPDD) is disordered. Over residues 180–190 (DGSSSTGSVGS) the composition is skewed to low complexity.

Belongs to the CCDC85 family. In terms of assembly, interacts with CEBPB. May interact with CEBPD. Interacts with EURL. Interacts with MCRS1. Interacts with TCF7L2; competes with CTNNB1. Interacts with ANKRD26. Interacts with the beta-catenin family proteins ARVCF, CTNND1, CTNND2 and PKP4. In terms of tissue distribution, expressed in white and brown adipose tissue.

The protein resides in the nucleus. Its subcellular location is the cytoplasm. The protein localises to the cytoskeleton. It is found in the microtubule organizing center. It localises to the centrosome. The protein resides in the cell junction. Its subcellular location is the adherens junction. Functions as a transcriptional repressor. May inhibit the activity of CTNNB1 in a TP53-dependent manner and thus regulate cell growth. May function in adipocyte differentiation, negatively regulating mitotic clonal expansion. Plays a role in cell-cell adhesion and epithelium development through its interaction with proteins of the beta-catenin family. In Mus musculus (Mouse), this protein is Coiled-coil domain-containing protein 85B (Ccdc85b).